The primary structure comprises 509 residues: ATP synthase subunit alpha (509 aa).

169–176 provides a ligand contact to ATP; sequence GDRQTGKT.

This sequence belongs to the ATPase alpha/beta chains family. As to quaternary structure, F-type ATPases have 2 components, CF(1) - the catalytic core - and CF(0) - the membrane proton channel. CF(1) has five subunits: alpha(3), beta(3), gamma(1), delta(1), epsilon(1). CF(0) has three main subunits: a(1), b(2) and c(9-12). The alpha and beta chains form an alternating ring which encloses part of the gamma chain. CF(1) is attached to CF(0) by a central stalk formed by the gamma and epsilon chains, while a peripheral stalk is formed by the delta and b chains.

Its subcellular location is the cell inner membrane. It carries out the reaction ATP + H2O + 4 H(+)(in) = ADP + phosphate + 5 H(+)(out). In terms of biological role, produces ATP from ADP in the presence of a proton gradient across the membrane. The alpha chain is a regulatory subunit. The sequence is that of ATP synthase subunit alpha from Sinorhizobium medicae (strain WSM419) (Ensifer medicae).